The following is a 226-amino-acid chain: Beta-phosphoglucomutase (226 aa).

The Nucleophile role is filled by Asp7. Positions 7 and 9 each coordinate Mg(2+). Residue Asp7 is modified to 4-aspartylphosphate. Asp9 serves as the catalytic Proton donor/acceptor. Asp9, Gly44, Ile45, Arg47, Ser116, Arg117, and Asn118 together coordinate beta-D-glucose 6-phosphate. Asp170 contacts Mg(2+).

It belongs to the HAD-like hydrolase superfamily. CbbY/CbbZ/Gph/YieH family. As to quaternary structure, homodimer. The cofactor is Mg(2+). Post-translationally, autophosphorylated.

The protein resides in the cytoplasm. It catalyses the reaction beta-D-glucose 1-phosphate = beta-D-glucose 6-phosphate. Its function is as follows. Catalyzes the interconversion of D-glucose 1-phosphate (G1P) and D-glucose 6-phosphate (G6P), forming beta-D-glucose 1,6-(bis)phosphate (beta-G16P) as an intermediate. The protein is Beta-phosphoglucomutase (yvdM) of Bacillus subtilis (strain 168).